The primary structure comprises 234 residues: uncharacterized protein (234 aa).

The helical transmembrane segment at 13 to 32 (KSINYYIFFFQYTLVYNTIQ) threads the bilayer. Disordered stretches follow at residues 102–130 (HSKT…SSNS) and 159–185 (ESDS…SEYE). Residues 103-130 (SKTTSLPFSSSSPQSSSSSSSSSSSSNS) are compositionally biased toward low complexity. The segment covering 167–185 (EFDSESNSDFDSESESEYE) has biased composition (acidic residues).

The protein resides in the membrane. This is an uncharacterized protein from Dictyostelium discoideum (Social amoeba).